The primary structure comprises 383 residues: Serine protease 23 (383 aa).

The first 19 residues, 1–19 (MAGIPGLLFLLFLLLCAVG), serve as a signal peptide directing secretion. Asn-93 carries an N-linked (GlcNAc...) asparagine glycan. Residues 108–127 (SSGGGAQHRDSGSSGKSRRK) are disordered. Ser-109 is subject to Phosphoserine; by FAM20C. The cysteines at positions 160 and 176 are disulfide-linked. The active-site Charge relay system is His-175. Residue Asn-207 is glycosylated (N-linked (GlcNAc...) asparagine). Active-site charge relay system residues include Asp-240 and Ser-316.

It belongs to the peptidase S1 family.

The protein resides in the secreted. In Macaca mulatta (Rhesus macaque), this protein is Serine protease 23 (PRSS23).